The following is a 449-amino-acid chain: Type 3 secretion system ATPase (449 aa).

An ATP-binding site is contributed by 178–183 (GCGKTT).

This sequence belongs to the ATPase alpha/beta chains family. T3SS ATPase subfamily. As to quaternary structure, the core secretion machinery of the T3SS is composed of approximately 20 different proteins, including cytoplasmic components, a base, an export apparatus and a needle. This subunit is part of the cytosolic complex. Forms homododecamers.

The protein resides in the cytoplasm. It catalyses the reaction ATP + H2O + cellular proteinSide 1 = ADP + phosphate + cellular proteinSide 2.. Its function is as follows. ATPase component of the type III secretion system (T3SS), also called injectisome, which is used to inject bacterial effector proteins into eukaryotic host cells. Acts as a molecular motor to provide the energy that is required for the export of proteins. Required for type III secretion apparatus (T3SA) formation, proper protein secretion, host cell invasion and virulence. May play a critical role in T3SS substrate recognition, disassembly of the effector/chaperone complex and unfolding of the effector in an ATP-dependent manner prior to secretion. The chain is Type 3 secretion system ATPase from Pseudomonas syringae pv. tomato (strain ATCC BAA-871 / DC3000).